The sequence spans 123 residues: Putative iron-sulfur cluster insertion protein ErpA (123 aa).

Iron-sulfur cluster-binding residues include C51, C115, and C117.

This sequence belongs to the HesB/IscA family. As to quaternary structure, homodimer. Iron-sulfur cluster serves as cofactor.

Functionally, required for insertion of 4Fe-4S clusters. This Burkholderia ambifaria (strain ATCC BAA-244 / DSM 16087 / CCUG 44356 / LMG 19182 / AMMD) (Burkholderia cepacia (strain AMMD)) protein is Putative iron-sulfur cluster insertion protein ErpA.